The following is a 229-amino-acid chain: Large ribosomal subunit protein uL1 (229 aa).

Belongs to the universal ribosomal protein uL1 family. Part of the 50S ribosomal subunit.

Binds directly to 23S rRNA. The L1 stalk is quite mobile in the ribosome, and is involved in E site tRNA release. Functionally, protein L1 is also a translational repressor protein, it controls the translation of the L11 operon by binding to its mRNA. In Bifidobacterium animalis subsp. lactis (strain AD011), this protein is Large ribosomal subunit protein uL1.